A 182-amino-acid polypeptide reads, in one-letter code: NAD(P)H-quinone oxidoreductase subunit I, chloroplastic (182 aa).

4Fe-4S ferredoxin-type domains are found at residues 52 to 81 (GRIH…VDWE) and 92 to 121 (KSYS…MTEE). [4Fe-4S] cluster contacts are provided by C61, C64, C67, C71, C101, C104, C107, and C111.

It belongs to the complex I 23 kDa subunit family. In terms of assembly, NDH is composed of at least 16 different subunits, 5 of which are encoded in the nucleus. The cofactor is [4Fe-4S] cluster.

The protein resides in the plastid. It is found in the chloroplast thylakoid membrane. It carries out the reaction a plastoquinone + NADH + (n+1) H(+)(in) = a plastoquinol + NAD(+) + n H(+)(out). It catalyses the reaction a plastoquinone + NADPH + (n+1) H(+)(in) = a plastoquinol + NADP(+) + n H(+)(out). NDH shuttles electrons from NAD(P)H:plastoquinone, via FMN and iron-sulfur (Fe-S) centers, to quinones in the photosynthetic chain and possibly in a chloroplast respiratory chain. The immediate electron acceptor for the enzyme in this species is believed to be plastoquinone. Couples the redox reaction to proton translocation, and thus conserves the redox energy in a proton gradient. This chain is NAD(P)H-quinone oxidoreductase subunit I, chloroplastic, found in Chaetosphaeridium globosum (Charophycean green alga).